Here is a 290-residue protein sequence, read N- to C-terminus: Phosphate import ATP-binding protein PstB (290 aa).

An ABC transporter domain is found at 43–285; it reads MSVRNLNVYY…PEHELTEAYI (243 aa). 75 to 82 contributes to the ATP binding site; sequence GPSGCGKS.

It belongs to the ABC transporter superfamily. Phosphate importer (TC 3.A.1.7) family. As to quaternary structure, the complex is composed of two ATP-binding proteins (PstB), two transmembrane proteins (PstC and PstA) and a solute-binding protein (PstS).

Its subcellular location is the cell inner membrane. It carries out the reaction phosphate(out) + ATP + H2O = ADP + 2 phosphate(in) + H(+). Functionally, part of the ABC transporter complex PstSACB involved in phosphate import. Responsible for energy coupling to the transport system. The protein is Phosphate import ATP-binding protein PstB of Pseudoalteromonas atlantica (strain T6c / ATCC BAA-1087).